A 256-amino-acid chain; its full sequence is uncharacterized protein (256 aa).

4 helical membrane passes run 5-25, 30-50, 64-84, and 105-125; these read FIEG…NYLL, ILST…LKVF, VVIF…DPAI, and VGIT…LGII. The tract at residues 198–256 is disordered; it reads EKTKSLDSISHSSSSSRKSSTELKIPPVETRIVAEIPVPSSVKRRRHRPNKSMGSIKNS. The span at 203-215 shows a compositional bias: low complexity; the sequence is LDSISHSSSSSRK. Residues S210 and S211 each carry the phosphoserine modification.

Its subcellular location is the endoplasmic reticulum membrane. The protein localises to the nucleus membrane. This is an uncharacterized protein from Schizosaccharomyces pombe (strain 972 / ATCC 24843) (Fission yeast).